Reading from the N-terminus, the 205-residue chain is Large ribosomal subunit protein uL4 (205 aa).

Residues R45–Y97 form a disordered region. Positions G60–G71 are enriched in basic residues.

Belongs to the universal ribosomal protein uL4 family. Part of the 50S ribosomal subunit.

One of the primary rRNA binding proteins, this protein initially binds near the 5'-end of the 23S rRNA. It is important during the early stages of 50S assembly. It makes multiple contacts with different domains of the 23S rRNA in the assembled 50S subunit and ribosome. In terms of biological role, forms part of the polypeptide exit tunnel. The polypeptide is Large ribosomal subunit protein uL4 (Lactobacillus johnsonii (strain CNCM I-12250 / La1 / NCC 533)).